A 348-amino-acid polypeptide reads, in one-letter code: Uroporphyrinogen decarboxylase (348 aa).

Substrate-binding positions include 27–31 (RQAGR), phenylalanine 46, aspartate 76, tyrosine 152, serine 207, and histidine 320.

Belongs to the uroporphyrinogen decarboxylase family. In terms of assembly, homodimer.

The protein localises to the cytoplasm. The catalysed reaction is uroporphyrinogen III + 4 H(+) = coproporphyrinogen III + 4 CO2. It participates in porphyrin-containing compound metabolism; protoporphyrin-IX biosynthesis; coproporphyrinogen-III from 5-aminolevulinate: step 4/4. Functionally, catalyzes the decarboxylation of four acetate groups of uroporphyrinogen-III to yield coproporphyrinogen-III. This Bacillus cereus (strain B4264) protein is Uroporphyrinogen decarboxylase.